A 200-amino-acid chain; its full sequence is Cation channel sperm-associated auxiliary subunit zeta (200 aa).

The segment covering 1-29 (MEEKPSKVSLKSSDRQGSDEESVHSDTRD) has biased composition (basic and acidic residues). Disordered regions lie at residues 1–31 (MEEK…RDLW) and 58–78 (NISK…EGYK).

In terms of assembly, component of the CatSper complex or CatSpermasome composed of the core pore-forming members CATSPER1, CATSPER2, CATSPER3 and CATSPER4 as well as auxiliary members CATSPERB, CATSPERG, CATSPERD, CATSPERE, CATSPERZ, C2CD6/CATSPERT, TMEM249, TMEM262 and EFCAB9. HSPA1 may be an additional auxiliary complex member. The core complex members CATSPER1, CATSPER2, CATSPER3 and CATSPER4 form a heterotetrameric channel. The auxiliary CATSPERB, CATSPERG, CATSPERD and CATSPERE subunits form a pavilion-like structure over the pore which stabilizes the complex through interactions with CATSPER4, CATSPER3, CATSPER1 and CATSPER2 respectively. TMEM262/CATSPERH interacts with CATSPERB, further stabilizing the complex. C2CD6/CATSPERT interacts at least with CATSPERD and is required for targeting the CatSper complex in the flagellar membrane. Interacts with EFCAB9; the interaction is direct, Ca(2+)-dependent and connects EFCAB9 with the CatSper complex. Dissociates from EFCAB9 at elevated pH.

It localises to the cell projection. The protein localises to the cilium. The protein resides in the flagellum membrane. Auxiliary component of the CatSper complex, a complex involved in sperm cell hyperactivation. Sperm cell hyperactivation is needed for sperm motility which is essential late in the preparation of sperm for fertilization. Required for a distribution of the CatSper complex in linear quadrilateral nanodomains along the flagellum, maximizing fertilization inside the mammalian female reproductive tract. Together with EFCAB9, associates with the CatSper channel pore and is required for the two-row structure of each single CatSper channel. In Homo sapiens (Human), this protein is Cation channel sperm-associated auxiliary subunit zeta.